Here is a 633-residue protein sequence, read N- to C-terminus: Extracellular metalloproteinase 3 (633 aa).

Residues 1-18 (MHGLLLAGLLALPMNVLA) form the signal peptide. Positions 19–246 (HPAEQHASNV…VHNVVDYVAS (228 aa)) are excised as a propeptide. Asparagine 410 carries an N-linked (GlcNAc...) asparagine glycan. Residue histidine 429 participates in Zn(2+) binding. Glutamate 430 is a catalytic residue. Histidine 433 is a Zn(2+) binding site. N-linked (GlcNAc...) asparagine glycans are attached at residues asparagine 480 and asparagine 622.

The protein belongs to the peptidase M36 family. It depends on Zn(2+) as a cofactor.

The protein resides in the secreted. Functionally, secreted metalloproteinase probably acting as a virulence factor. The chain is Extracellular metalloproteinase 3 (MEP3) from Trichophyton tonsurans (Scalp ringworm fungus).